A 470-amino-acid chain; its full sequence is Light-independent protochlorophyllide reductase subunit N (470 aa).

Cysteine 24, cysteine 49, and cysteine 109 together coordinate [4Fe-4S] cluster.

The protein belongs to the BchN/ChlN family. As to quaternary structure, protochlorophyllide reductase is composed of three subunits; ChlL, ChlN and ChlB. Forms a heterotetramer of two ChlB and two ChlN subunits. It depends on [4Fe-4S] cluster as a cofactor.

The enzyme catalyses chlorophyllide a + oxidized 2[4Fe-4S]-[ferredoxin] + 2 ADP + 2 phosphate = protochlorophyllide a + reduced 2[4Fe-4S]-[ferredoxin] + 2 ATP + 2 H2O. Its pathway is porphyrin-containing compound metabolism; chlorophyll biosynthesis (light-independent). Functionally, component of the dark-operative protochlorophyllide reductase (DPOR) that uses Mg-ATP and reduced ferredoxin to reduce ring D of protochlorophyllide (Pchlide) to form chlorophyllide a (Chlide). This reaction is light-independent. The NB-protein (ChlN-ChlB) is the catalytic component of the complex. The protein is Light-independent protochlorophyllide reductase subunit N of Acaryochloris marina (strain MBIC 11017).